Consider the following 143-residue polypeptide: Large ribosomal subunit protein uL13 (143 aa).

It belongs to the universal ribosomal protein uL13 family. In terms of assembly, part of the 50S ribosomal subunit.

In terms of biological role, this protein is one of the early assembly proteins of the 50S ribosomal subunit, although it is not seen to bind rRNA by itself. It is important during the early stages of 50S assembly. The chain is Large ribosomal subunit protein uL13 from Dehalococcoides mccartyi (strain ATCC BAA-2100 / JCM 16839 / KCTC 5957 / BAV1).